The following is a 374-amino-acid chain: N-acetyldiaminopimelate deacetylase (374 aa).

Asp-69 is a catalytic residue. The Proton acceptor role is filled by Glu-128.

It belongs to the peptidase M20A family. N-acetyldiaminopimelate deacetylase subfamily.

The enzyme catalyses N-acetyl-(2S,6S)-2,6-diaminopimelate + H2O = (2S,6S)-2,6-diaminopimelate + acetate. It functions in the pathway amino-acid biosynthesis; L-lysine biosynthesis via DAP pathway; LL-2,6-diaminopimelate from (S)-tetrahydrodipicolinate (acetylase route): step 3/3. Catalyzes the conversion of N-acetyl-diaminopimelate to diaminopimelate and acetate. This is N-acetyldiaminopimelate deacetylase from Bacillus licheniformis (strain ATCC 14580 / DSM 13 / JCM 2505 / CCUG 7422 / NBRC 12200 / NCIMB 9375 / NCTC 10341 / NRRL NRS-1264 / Gibson 46).